Consider the following 210-residue polypeptide: Large ribosomal subunit protein uL5 (210 aa).

The segment at 188–210 (AKDDPKKAKTKRGPAYYAKKKKK) is disordered. Residues 195–210 (AKTKRGPAYYAKKKKK) show a composition bias toward basic residues.

Belongs to the universal ribosomal protein uL5 family. As to quaternary structure, part of the 50S ribosomal subunit; part of the 5S rRNA/L5/L18/L25 subcomplex. Contacts the 5S rRNA and the P site tRNA. Forms a bridge to the 30S subunit in the 70S ribosome.

Its function is as follows. This is one of the proteins that bind and probably mediate the attachment of the 5S RNA into the large ribosomal subunit, where it forms part of the central protuberance. In the 70S ribosome it contacts protein S13 of the 30S subunit (bridge B1b), connecting the 2 subunits; this bridge is implicated in subunit movement. Contacts the P site tRNA; the 5S rRNA and some of its associated proteins might help stabilize positioning of ribosome-bound tRNAs. This chain is Large ribosomal subunit protein uL5, found in Cutibacterium acnes (strain DSM 16379 / KPA171202) (Propionibacterium acnes).